The chain runs to 58 residues: Small ribosomal subunit protein bS21 (58 aa).

Belongs to the bacterial ribosomal protein bS21 family.

The chain is Small ribosomal subunit protein bS21 from Staphylococcus saprophyticus subsp. saprophyticus (strain ATCC 15305 / DSM 20229 / NCIMB 8711 / NCTC 7292 / S-41).